Reading from the N-terminus, the 720-residue chain is Zinc finger protein 408 (720 aa).

The disordered stretch occupies residues 201–350; it reads VQQEVASPGE…GPAGSSPKQG (150 aa). Over residues 275-285 the composition is skewed to polar residues; it reads LQSNSATQQDP. Residues 287–296 show a composition bias toward low complexity; the sequence is GSGASFSSSA. A Phosphothreonine modification is found at T322. 10 consecutive C2H2-type zinc fingers follow at residues 353–375, 381–403, 409–431, 437–459, 468–490, 496–518, 524–546, 551–573, 579–601, and 607–629; these read YRCG…AFVH, FLCT…MLGH, FPCP…QVVH, FACD…RKTH, CPCP…MRLH, FLCP…LRLH, YRCP…LISH, HLCP…ERLH, FPCP…LKSH, and YRCP…QLSH.

In terms of tissue distribution, highest expression is observed in adult retina; abundantly expressed in the fetal eye. In the retina, it is detected in the outer nuclear layer, especially cone and rod photoreceptor cells, ganglion cell layer and both outer and inner plexiform layers (at protein level). Expressed in retinal blood vessels (at protein level).

The protein localises to the nucleus. Its function is as follows. May be involved in transcriptional regulation. This is Zinc finger protein 408 (ZNF408) from Homo sapiens (Human).